Here is a 200-residue protein sequence, read N- to C-terminus: Putative 3-methyladenine DNA glycosylase (200 aa).

Belongs to the DNA glycosylase MPG family.

This is Putative 3-methyladenine DNA glycosylase from Rhodopseudomonas palustris (strain BisB18).